The following is a 78-amino-acid chain: Apolipoprotein C-I (78 aa).

Positions 1 to 26 (MRLILWLPVLVVVLLMVLEGPAPAQG) are cleaved as a signal peptide.

This sequence belongs to the apolipoprotein C1 family.

The protein resides in the secreted. Its function is as follows. Inhibitor of lipoprotein binding to the low density lipoprotein (LDL) receptor, LDL receptor-related protein, and very low density lipoprotein (VLDL) receptor. Associates with high density lipoproteins (HDL) and the triacylglycerol-rich lipoproteins in the plasma and makes up about 10% of the protein of the VLDL and 2% of that of HDL. Appears to interfere directly with fatty acid uptake and is also the major plasma inhibitor of cholesteryl ester transfer protein (CETP). Binds free fatty acids and reduces their intracellular esterification. Modulates the interaction of APOE with beta-migrating VLDL and inhibits binding of beta-VLDL to the LDL receptor-related protein. The polypeptide is Apolipoprotein C-I (APOC1) (Puma concolor (Mountain lion)).